Consider the following 421-residue polypeptide: 4-hydroxy-3-methylbut-2-en-1-yl diphosphate synthase (flavodoxin) (421 aa).

[4Fe-4S] cluster-binding residues include Cys-311, Cys-314, Cys-357, and Glu-364.

Belongs to the IspG family. The cofactor is [4Fe-4S] cluster.

The enzyme catalyses (2E)-4-hydroxy-3-methylbut-2-enyl diphosphate + oxidized [flavodoxin] + H2O + 2 H(+) = 2-C-methyl-D-erythritol 2,4-cyclic diphosphate + reduced [flavodoxin]. It participates in isoprenoid biosynthesis; isopentenyl diphosphate biosynthesis via DXP pathway; isopentenyl diphosphate from 1-deoxy-D-xylulose 5-phosphate: step 5/6. In terms of biological role, converts 2C-methyl-D-erythritol 2,4-cyclodiphosphate (ME-2,4cPP) into 1-hydroxy-2-methyl-2-(E)-butenyl 4-diphosphate. The polypeptide is 4-hydroxy-3-methylbut-2-en-1-yl diphosphate synthase (flavodoxin) (Xanthomonas oryzae pv. oryzae (strain MAFF 311018)).